The sequence spans 701 residues: Glycine--tRNA ligase beta subunit (701 aa).

Belongs to the class-II aminoacyl-tRNA synthetase family. As to quaternary structure, tetramer of two alpha and two beta subunits.

The protein localises to the cytoplasm. It catalyses the reaction tRNA(Gly) + glycine + ATP = glycyl-tRNA(Gly) + AMP + diphosphate. In Anaeromyxobacter dehalogenans (strain 2CP-C), this protein is Glycine--tRNA ligase beta subunit.